The following is a 251-amino-acid chain: MAIHGDRDDELRLFQTGEHPCGYWSDRVARDLVLDPNDRRLGALYPLALSWGFRRSGDLVYRPHCAHCQACVAVRIPVARFAPDRSQRRCAARNADLEVRITAATARDDLFALYHRYLTHRHANGGMDDHGPHEFEQFLIGSWSHTRFMEMRLPGHDGQPSQLLGVAVTDVTEHGLSAVYTFFDPDHAARGLGTFAILQQIEWARREGLPHVYLGYWIRGHQKMDYKRRFHPLEAYDGRRWHDFDNDLDGR.

Belongs to the R-transferase family. Bpt subfamily.

It localises to the cytoplasm. The enzyme catalyses N-terminal L-glutamyl-[protein] + L-leucyl-tRNA(Leu) = N-terminal L-leucyl-L-glutamyl-[protein] + tRNA(Leu) + H(+). It catalyses the reaction N-terminal L-aspartyl-[protein] + L-leucyl-tRNA(Leu) = N-terminal L-leucyl-L-aspartyl-[protein] + tRNA(Leu) + H(+). Functionally, functions in the N-end rule pathway of protein degradation where it conjugates Leu from its aminoacyl-tRNA to the N-termini of proteins containing an N-terminal aspartate or glutamate. The chain is Aspartate/glutamate leucyltransferase from Stenotrophomonas maltophilia (strain K279a).